We begin with the raw amino-acid sequence, 466 residues long: Transcription factor SOX-10 (466 aa).

The segment at 1–67 is disordered; that stretch reads MAEEQDLSEV…QQDGEADDDK (67 aa). The segment covering 23–32 has biased composition (low complexity); the sequence is LSPGSAPSLG. Ser-24 is modified (phosphoserine). The tract at residues 62–102 is dimerization (DIM); it reads EADDDKFPVCIREAVSQVLSGYDWTLVPMPVRVNGASKSKP. Residues 104–172 constitute a DNA-binding region (HMG box); that stretch reads VKRPMNAFMV…QHKKDHPDYK (69 aa). The short motif at 134 to 145 is the Nuclear export signal element; that stretch reads LSKTLGKLWRLL. Basic and acidic residues-rich tracts occupy residues 160 to 173 and 254 to 271; these read LRMQHKKDHPDYKY and ADPKRDGRSMGEGGKPHI. Disordered stretches follow at residues 160-199, 212-274, 354-375, and 433-466; these read LRMQHKKDHPDYKYQPRRRKNGKAAQGEAECPGGEAEQGG, LDHR…IDFG, AQVKTETAGPQGPPHYTDQPST, and RPLYTAISDPSPSGPQSHSPTHWEQPVYTTLSRP. Positions 228 to 310 are transactivation domain (TAM); the sequence is PEHPSGQSHG…LPPNGHPGHV (83 aa). Residues 353 to 466 form a transactivation domain (TAC) region; that stretch reads KAQVKTETAG…QPVYTTLSRP (114 aa). A compositionally biased stretch (polar residues) spans 440 to 466; the sequence is SDPSPSGPQSHSPTHWEQPVYTTLSRP.

Monomer. Interacts with ARMCX3 at the mitochondrial outer membrane surface. Interacts with PAX3. Expressed in fetal brain and in adult brain, heart, small intestine and colon.

It is found in the cytoplasm. It localises to the nucleus. Its subcellular location is the mitochondrion outer membrane. Its function is as follows. Transcription factor that plays a central role in developing and mature glia. Specifically activates expression of myelin genes, during oligodendrocyte (OL) maturation, such as DUSP15 and MYRF, thereby playing a central role in oligodendrocyte maturation and CNS myelination. Once induced, MYRF cooperates with SOX10 to implement the myelination program. Transcriptional activator of MITF, acting synergistically with PAX3. Transcriptional activator of MBP, via binding to the gene promoter. The sequence is that of Transcription factor SOX-10 (SOX10) from Homo sapiens (Human).